The chain runs to 121 residues: Large ribosomal subunit protein uL24 (121 aa).

Residues Met1–Ala30 form a disordered region.

The protein belongs to the universal ribosomal protein uL24 family. As to quaternary structure, part of the 50S ribosomal subunit.

Its function is as follows. One of two assembly initiator proteins, it binds directly to the 5'-end of the 23S rRNA, where it nucleates assembly of the 50S subunit. Functionally, located at the polypeptide exit tunnel on the outside of the subunit. The chain is Large ribosomal subunit protein uL24 from Methanoculleus marisnigri (strain ATCC 35101 / DSM 1498 / JR1).